The following is a 511-amino-acid chain: Maturase K (511 aa).

This sequence belongs to the intron maturase 2 family. MatK subfamily.

It localises to the plastid. It is found in the chloroplast. Usually encoded in the trnK tRNA gene intron. Probably assists in splicing its own and other chloroplast group II introns. In Adesmia lanata, this protein is Maturase K.